A 355-amino-acid chain; its full sequence is Ubiquinone biosynthesis protein COQ4 homolog, mitochondrial (355 aa).

Zn(2+) contacts are provided by His-134, Asp-135, His-138, and Glu-150.

The protein belongs to the COQ4 family. Component of a multi-subunit COQ enzyme complex. Requires Zn(2+) as cofactor.

It is found in the mitochondrion inner membrane. The enzyme catalyses a 4-hydroxy-3-methoxy-5-(all-trans-polyprenyl)benzoate + H(+) = a 2-methoxy-6-(all-trans-polyprenyl)phenol + CO2. The protein operates within cofactor biosynthesis; ubiquinone biosynthesis. In terms of biological role, lyase that catalyzes the C1-decarboxylation of 4-hydroxy-3-methoxy-5-(all-trans-polyprenyl)benzoic acid into 2-methoxy-6-(all-trans-polyprenyl)phenol during ubiquinone biosynthesis. The polypeptide is Ubiquinone biosynthesis protein COQ4 homolog, mitochondrial (Plasmodium vivax (strain Salvador I)).